We begin with the raw amino-acid sequence, 4486 residues long: Dynein axonemal heavy chain 9 (4486 aa).

A stem region spans residues 1-1831; the sequence is MRLAEERAAL…FANICDAQFL (1831 aa). 5 coiled-coil regions span residues 381–410, 504–529, 639–662, 752–823, and 1326–1355; these read DLLR…EFQD, QSTD…LGTI, AEGK…ETRL, TLLE…TWVT, and NINV…AWDA. AAA stretches follow at residues 1832–2053, 2113–2334, 2440–2688, and 2787–3036; these read YSYE…VLVV, ALVR…TRFK, EFDP…IFQG, and NHNE…EQRY. Residues 1870 to 1877, 2151 to 2158, 2478 to 2485, and 2825 to 2832 contribute to the ATP site; these read GPAGTGKT, GGAGTGKS, GTAGTGKS, and GVGGSGKQ. 3 coiled-coil regions span residues 3051–3154, 3285–3341, and 3640–3675; these read YQSL…AKAE, KRQA…AEVT, and LVEN…REHY. Residues 3051–3341 are stalk; that stretch reads YQSLLHRHRK…LKCQQEAEVT (291 aa). 2 AAA regions span residues 3429–3656 and 3866–4092; these read LMDD…EVEK and LRDF…VLYN.

This sequence belongs to the dynein heavy chain family. As to quaternary structure, consists of at least two heavy chains and a number of intermediate and light chains. Interacts with ODAD1. As to expression, expressed in upper and lower respiratory airway epithelia (at protein level). Not detected in spermatozoa (at protein level).

The protein resides in the cytoplasm. Its subcellular location is the cytoskeleton. The protein localises to the cilium axoneme. In terms of biological role, force generating protein required for cilia beating in respiratory epithelia. Produces force towards the minus ends of microtubules. Dynein has ATPase activity; the force-producing power stroke is thought to occur on release of ADP. The protein is Dynein axonemal heavy chain 9 of Homo sapiens (Human).